The sequence spans 829 residues: MKMTRRAFVKANAAASAAAVAGITLPASAANLIASSDQTKITWDKAPCRFCGTGCSVLVGTQNGKVVATQGDPEAPVNKGLNCIKGYFLSKIMYGQDRLTQPLLRMKDGKYDKEGDFTPVSWDVAFDTMAEKWKASLAKKGPTSIGMFGSGQWTVMEGYAAAKMMKAGFRSNNIDPNARHCMASAVVGFMRTFGIDEPMGCYDDFEHADSFVLWGSNMAEMHPVLWTRITDRRLSHPHVKVNVLSTYYHRSFELADSGYIFKPQSDLAIANFIANYIIQNDAVNWDFVNKHTNFKQATTDIGYGLRDDDPLQKQAKNPNSGNMTSISFEEYKKSVAPYTVEKASEMSGVAQDKLIELAKQYADPNTKVMSLWTMGMNQHTRGVWMNSLVYNIHLLTGKISTPGNSPFSLTGQPSACGTAREVGTFAHRLPADMVVANPKHRAIAEKIWKLPEGTIPPKPGFHAVLQDRMLHDGVLNCYWVQCNNNMQAGPNINGERLPGYRNPENFIVVSDPYPTATAQAADLILPTAMWIEKEGAYGNAERRTQAWYQQVGTVGEAKSDLWQVMEFSKRFKMEEVWPEELLAKAPQYRGKTMYDMLFANGQVDKFPLSEARQLNDDSHHFGFYVQKGLFEEYAEFGRGHGHDLAPYDVYHTVRGLRWPVVDGKETLWRYKEGSDPYAKKGSGWDFYGKPDGKALIISAPYEAPPESPDAEYDMWLCTGRVLEHWHTGTMTRRVPELYKAVPDAVCYIHPEDAKARGLRRGDEVLISNKRGEVRVRVETRGRNRPPQGLVFVPFFDARILINKLILDATDPLSKQTDFKKCPVKITKVA.

A signal peptide (tat-type signal) is located at residues 1 to 30; that stretch reads MKMTRRAFVKANAAASAAAVAGITLPASAA. The 4Fe-4S Mo/W bis-MGD-type domain maps to 41 to 97; that stretch reads ITWDKAPCRFCGTGCSVLVGTQNGKVVATQGDPEAPVNKGLNCIKGYFLSKIMYGQD. Residues Cys48, Cys51, Cys55, and Cys83 each contribute to the [4Fe-4S] cluster site. Mo-bis(molybdopterin guanine dinucleotide)-binding positions include Lys85, Gln152, Asn177, Cys181, 214–221, 245–249, 264–266, Met374, Gln378, Asn484, 510–511, Lys533, Asp560, and 718–727; these read WGSNMAEM, STYYH, QSD, SD, and TGRVLEHWHT. Phe794 lines the substrate pocket. 2 residues coordinate Mo-bis(molybdopterin guanine dinucleotide): Asn802 and Lys819.

Belongs to the prokaryotic molybdopterin-containing oxidoreductase family. NasA/NapA/NarB subfamily. In terms of assembly, component of the periplasmic nitrate reductase NapAB complex composed of NapA and NapB. [4Fe-4S] cluster serves as cofactor. The cofactor is Mo-bis(molybdopterin guanine dinucleotide). In terms of processing, predicted to be exported by the Tat system. The position of the signal peptide cleavage has not been experimentally proven.

The protein resides in the periplasm. The enzyme catalyses 2 Fe(II)-[cytochrome] + nitrate + 2 H(+) = 2 Fe(III)-[cytochrome] + nitrite + H2O. Its function is as follows. Catalytic subunit of the periplasmic nitrate reductase complex NapAB. Receives electrons from NapB and catalyzes the reduction of nitrate to nitrite. The sequence is that of Periplasmic nitrate reductase from Vibrio vulnificus (strain CMCP6).